We begin with the raw amino-acid sequence, 777 residues long: E3 UFM1-protein ligase 1 homolog (777 aa).

Basic and acidic residues predominate over residues 396–417 (MKHQDPMDRDSAVGEGKADKRE). The segment at 396–470 (MKHQDPMDRD…PSGGKKGGKD (75 aa)) is disordered.

This sequence belongs to the UFL1 family.

E3 UFM1-protein ligase that mediates ufmylation of target proteins. The sequence is that of E3 UFM1-protein ligase 1 homolog from Aedes aegypti (Yellowfever mosquito).